The following is a 601-amino-acid chain: Glutathione-regulated potassium-efflux system protein KefB (601 aa).

The next 13 membrane-spanning stretches (helical) occupy residues 4–24 (ADLL…VPLA), 29–49 (IGAV…GLGF), 55–75 (EILH…GLEL), 87–107 (IFGV…GLLM), 111–131 (FLWQ…TAMA), 152–172 (VLLF…LLAG), 177–197 (HFDW…LIGG), 207–227 (FIAA…LVLS), 230–250 (LFMD…GVLL), 262–282 (AIDP…GMSL), 284–304 (LGVL…LVVI), 324–344 (MQFA…FSTA), and 356–376 (ALLL…MKGI). The 120-residue stretch at 400-519 (KPQVVVVGFG…AGVTQFSRET (120 aa)) folds into the RCK N-terminal domain.

This sequence belongs to the monovalent cation:proton antiporter 2 (CPA2) transporter (TC 2.A.37) family. KefB subfamily. As to quaternary structure, interacts with the regulatory subunit KefG.

It is found in the cell inner membrane. Its function is as follows. Pore-forming subunit of a potassium efflux system that confers protection against electrophiles. Catalyzes K(+)/H(+) antiport. The chain is Glutathione-regulated potassium-efflux system protein KefB from Salmonella typhi.